The primary structure comprises 247 residues: Protein eak-4 (247 aa).

Glycine 2 carries the N-myristoyl glycine lipid modification.

As to expression, expressed in the 2 embryonic head hypodermal cells XXXL/R.

It is found in the cell membrane. Its function is as follows. Together with eak-6 and sdf-9, negatively regulates dauer larva formation downstream of the insulin-like receptor daf-2 and in parallel with age-1, pdk-1 and akt-1. The polypeptide is Protein eak-4 (Caenorhabditis elegans).